Consider the following 171-residue polypeptide: Putative phosphoesterase BPUM_1117 (171 aa).

H34 acts as the Proton donor in catalysis. 2 consecutive short sequence motifs (HXTX) follow at residues 34 to 37 (HLTL) and 115 to 118 (HVTV). Catalysis depends on H115, which acts as the Proton acceptor.

The protein belongs to the 2H phosphoesterase superfamily. YjcG family.

The protein is Putative phosphoesterase BPUM_1117 of Bacillus pumilus (strain SAFR-032).